A 204-amino-acid polypeptide reads, in one-letter code: Tumor protein D53 (204 aa).

The interval 1 to 20 (MEAQAQGLLETEPLQGTDED) is disordered. Residues 22–73 (VASADFSSMLSEEEKEELKAELVQLEDEITTLRQVLSAKERHLVEIKQKLGM) are a coiled coil. Phosphoserine occurs at positions 29, 86, 122, and 131. Omega-N-methylarginine is present on Arg-133. Thr-146 is modified (phosphothreonine). A phosphoserine mark is found at Ser-149 and Ser-174.

It belongs to the TPD52 family. As to quaternary structure, forms a homodimer or heterodimer with other members of the family.

In Homo sapiens (Human), this protein is Tumor protein D53 (TPD52L1).